Consider the following 3011-residue polypeptide: Genome polyprotein (3011 aa).

Ser2 is subject to N-acetylserine; by host. The interval 2 to 23 (STIPKPQRKTKRNTNRRPQDVK) is interaction with STAT1. Residues 2–58 (STIPKPQRKTKRNTNRRPQDVKFPGGGQIVGGVYLLPRRGPRLGVRATRKTSERSQP) are interaction with EIF2AK2/PKR. The tract at residues 2–59 (STIPKPQRKTKRNTNRRPQDVKFPGGGQIVGGVYLLPRRGPRLGVRATRKTSERSQPR) is interaction with DDX3X. The tract at residues 2–75 (STIPKPQRKT…PKVRRPEGRT (74 aa)) is disordered. Over 2 to 168 (STIPKPQRKT…EDGVNYATGN (167 aa)) the chain is Cytoplasmic. Short sequence motifs (nuclear localization signal) lie at residues 5–13 (PKPQRKTKR) and 38–43 (PRRGPR). Residues 7 to 16 (PQRKTKRNTN) show a composition bias toward basic residues. Residues 32 to 47 (GGVYLLPRRGPRLGVR) show a composition bias toward low complexity. Ser53 is modified (phosphoserine; by host). 2 short sequence motifs (nuclear localization signal) span residues 58–64 (PRGRRQP) and 66–71 (PKVRRP). Basic residues predominate over residues 58–68 (PRGRRQPIPKV). Ser99 is subject to Phosphoserine; by host. Positions 112 to 152 (PRRRSRNLGKVIDTLTCGFADLMGYIPLVGAPLGGAARALA) are important for endoplasmic reticulum and mitochondrial localization. Ser116 carries the post-translational modification Phosphoserine; by host PKA. The segment at 122–173 (VIDTLTCGFADLMGYIPLVGAPLGGAARALAHGVRVLEDGVNYATGNLPGCS) is interaction with APOA2. The segment at 164 to 167 (YATG) is important for lipid droplets localization. A helical membrane pass occupies residues 169-189 (LPGCSFSIFLLALLSCLTVPA). Positions 178–191 (LLALLSCLTVPASA) are cleaved as a propeptide — ER anchor for the core protein, removed in mature form by host signal peptidase. Over 190–358 (SAYQVRNSTG…AGAHWGVLAG (169 aa)) the chain is Lumenal. Asn196, Asn209, and Asn234 each carry an N-linked (GlcNAc...) asparagine; by host glycan. The interval 265 to 296 (LVGSATLCSALYVGDLCGSVFLIGQLFTFSPR) is important for fusion. N-linked (GlcNAc...) asparagine; by host glycosylation is present at Asn305. A helical transmembrane segment spans residues 359-379 (IAYFSMVGNWAKVLVVLLLFA). The Lumenal portion of the chain corresponds to 380 to 725 (GVDAETIVSG…WEYVVLLFLL (346 aa)). Positions 385–411 (TIVSGGQAARAMSGLVSLFTPGAKQNI) are HVR1. Asn417, Asn423, Asn430, and Asn448 each carry an N-linked (GlcNAc...) (high mannose) asparagine; by host glycan. Cystine bridges form between Cys429–Cys552, Cys452–Cys459, Cys486–Cys494, and Cys503–Cys508. The tract at residues 474–479 (HANGSG) is HVR2. The interval 480 to 493 (PDQRPYCWHYPPKP) is CD81-binding 1. An N-linked (GlcNAc...) (high mannose) asparagine; by host glycan is attached at Asn532. A glycan (N-linked (GlcNAc...) asparagine; by host) is linked at Asn540. A CD81-binding 2 region spans residues 544 to 551 (PPLGNWFG). N-linked (GlcNAc...) (high mannose) asparagine; by host glycosylation occurs at Asn556. Cysteines 564 and 569 form a disulfide. Asn576 is a glycosylation site (N-linked (GlcNAc...) (high mannose) asparagine; by host). Disulfide bonds link Cys581–Cys585, Cys597–Cys620, and Cys607–Cys644. 2 N-linked (GlcNAc...) (high mannose) asparagine; by host glycosylation sites follow: Asn623 and Asn645. A disulfide bridge connects residues Cys652 and Cys677. The segment at 660–671 (SELSPLLLSTTQ) is PKR/eIF2-alpha phosphorylation homology domain (PePHD). A helical membrane pass occupies residues 726 to 746 (LADARVCSCLWMMLLISQAEA). Residues 747-757 (ALENLVILNAA) lie on the Lumenal side of the membrane. A helical transmembrane segment spans residues 758-778 (SLAGTRGLVSFLVFFCFAWYL). Topologically, residues 779–781 (KGR) are cytoplasmic. Residues 782–803 (WVPGAAYALYGMWPLLLLLLAL) traverse the membrane as a helical segment. Residues 804–813 (PQRAYALDTE) lie on the Lumenal side of the membrane. A helical transmembrane segment spans residues 814-834 (VAASCGGVVLVGLMALTLSPY). Topologically, residues 835-838 (YKRC) are cytoplasmic. The chain crosses the membrane as a helical span at residues 839–859 (ISWCLWWLQYFLTRVEAQLHV). Residues 860–881 (WVPPLNVRGGRDAVILLMCVVH) lie on the Lumenal side of the membrane. A helical transmembrane segment spans residues 882-902 (PTLVFDITKLLLAVLGPLWIL). The Peptidase C18 domain maps to 903–1026 (QASLLKVPYF…GMVSKGWRLL (124 aa)). The Cytoplasmic portion of the chain corresponds to 903 to 1657 (QASLLKVPYF…CMSADLEVVT (755 aa)). Positions 904 to 1206 (ASLLKVPYFV…PVESLETTMR (303 aa)) are protease NS2-3. A lipid anchor (S-palmitoyl cysteine; by host) is attached at Cys922. The interaction with host SCPS1 stretch occupies residues 929–949 (VGGHYVQMAIIKLGALTGTYV). Active-site for protease NS2 activity; shared with dimeric partner residues include His952, Glu972, and Cys993. The region spanning 1027 to 1208 (APITAYAQQT…ESLETTMRSP (182 aa)) is the Peptidase S29 domain. Active-site charge relay system; for serine protease NS3 activity residues include His1083 and Asp1107. 2 residues coordinate Zn(2+): Cys1123 and Cys1125. Ser1165 (charge relay system; for serine protease NS3 activity) is an active-site residue. The Zn(2+) site is built by Cys1171 and His1175. Residues 1217–1369 (PAVPQSFQVA…ANIEEVALST (153 aa)) enclose the Helicase ATP-binding domain. 1230–1237 (APTGSGKS) contributes to the ATP binding site. Mg(2+) is bound by residues Ser1237 and Glu1317. Positions 1316 to 1319 (DECH) match the DECH box motif. Positions 1486 to 1497 (QRRGRTGRGKPG) are RNA-binding. A helical transmembrane segment spans residues 1658 to 1678 (STWVLVGGVLAALAAYCLSTG). Positions 1679–1690 (CVVIVGRIVLSG) are NS3-binding. Over 1679-1805 (CVVIVGRIVL…AVTSPLTTSQ (127 aa)) the chain is Cytoplasmic. A helical membrane pass occupies residues 1806–1824 (TLLFNILGGWVAAQLAAPG). The Lumenal segment spans residues 1825–1828 (AATA). The chain crosses the membrane as a helical span at residues 1829 to 1849 (FVGSGLAGAAVGSVGLGRVLV). Residue Asp1850 is a topological domain, cytoplasmic. A helical membrane pass occupies residues 1851–1871 (ILAGYGAGVAGALVAFKIMSG). Residues 1872–1881 (ELPSTEDLVN) lie on the Lumenal side of the membrane. A helical membrane pass occupies residues 1882–1902 (LLPAILSPGALVVGVVCAAIL). The Cytoplasmic segment spans residues 1903–1972 (RRHVGPGEGA…WLSSESTTPC (70 aa)). Cys1972 carries the S-palmitoyl cysteine; by host lipid modification. An intramembrane segment occupies 1973–2002 (SGSWLRDIWDWICEVLSDFKTWLKTKLMPH). The Cytoplasmic segment spans residues 2003 to 2990 (LPGIPFVSCQ…YHSVSHARPR (988 aa)). Zn(2+) is bound by residues Cys2011, Cys2029, Cys2031, and Cys2052. Residues 2120–2208 (EFFTELDGVR…ASSSASQLSA (89 aa)) are FKBP8-binding. Residues 2120-2332 (EFFTELDGVR…PVPPPRKKRT (213 aa)) are transcriptional activation. Residues 2135-2139 (PPCKP) form an interaction with non-structural protein 4A region. The disordered stretch occupies residues 2187–2207 (GRRLARGSPPSEASSSASQLS). Residues 2189–2441 (RLARGSPPSE…TPCAAEEQKL (253 aa)) form an interaction with host SKP2 region. Ser2194 carries the post-translational modification Phosphoserine; by host; in p56. Residues Ser2197, Ser2201, Ser2204, Ser2207, and Ser2210 each carry the phosphoserine; by host; in p58 modification. The ISDR stretch occupies residues 2210–2249 (SLKATCTINHDSPDAELIEANLLWRQEMGGNITRVESENK). The tract at residues 2210 to 2275 (SLKATCTINH…REISVPAEIL (66 aa)) is interaction with EIF2AK2/PKR. Residues 2249–2306 (KVVILDSFDPLVAEEDEREISVPAEILRKSRRFTQALPIWARPDYNPPLIETWKKPNY) form an NS4B-binding region. The disordered stretch occupies residues 2312-2334 (HGCPLPPPQSPPVPPPRKKRTVV). Positions 2315-2326 (PLPPPQSPPVPP) are enriched in pro residues. Positions 2322-2325 (PPVP) match the SH3-binding motif. The short motif at 2326-2334 (PPRKKRTVV) is the Nuclear localization signal element. A Glycyl lysine isopeptide (Lys-Gly) (interchain with G-Cter in ubiquitin) cross-link involves residue Lys2350. A compositionally biased stretch (low complexity) spans 2351–2369 (SFGSSSTSGITGDNTTTSS). Residues 2351 to 2408 (SFGSSSTSGITGDNTTTSSEPAPSGCSPDSDAESYSSMPPLEGEPGDPDLSDGSWSTV) are disordered. Residues 2354–2377 (SSSTSGITGDNTTTSSEPAPSGCS) form a V3 region. Phosphoserine; by host occurs at positions 2449 and 2462. The region spanning 2634–2752 (PMGFSYDTRC…ICESAGVQED (119 aa)) is the RdRp catalytic domain. 3 residues coordinate Mg(2+): Asp2640, Asp2738, and Asp2739. Residues 2991–3011 (WFWFCLLLLAAGVGIYLLPNR) form a helical membrane-spanning segment.

This sequence belongs to the hepacivirus polyprotein family. As to quaternary structure, homooligomer. Interacts with E1 (via C-terminus). Interacts with the non-structural protein 5A. Interacts (via N-terminus) with host STAT1 (via SH2 domain); this interaction results in decreased STAT1 phosphorylation and ubiquitin-mediated proteasome-dependent STAT1 degradation, leading to decreased IFN-stimulated gene transcription. Interacts with host STAT3; this interaction constitutively activates STAT3. Interacts with host LTBR receptor. Interacts with host TNFRSF1A receptor and possibly induces apoptosis. Interacts with host HNRPK. Interacts with host YWHAE. Interacts with host UBE3A/E6AP. Interacts with host DDX3X. Interacts with host APOA2. Interacts with host RXRA protein. Interacts with host SP110 isoform 3/Sp110b; this interaction sequesters the transcriptional corepressor SP110 away from the nucleus. Interacts with host CREB3 nuclear transcription protein; this interaction triggers cell transformation. Interacts with host ACY3. Interacts with host C1QR1. Interacts with host RBM24; this interaction, which enhances the interaction of the mature core protein with 5'-UTR, may inhibit viral translation and favor replication. Interacts with host EIF2AK2/PKR; this interaction induces the autophosphorylation of EIF2AK2. Part of the viral assembly initiation complex composed of NS2, E1, E2, NS3, NS4A, NS5A and the mature core protein. In terms of assembly, forms a heterodimer with envelope glycoprotein E2. Interacts with mature core protein. Interacts with protease NS2. The heterodimer E1/E2 interacts with host CLDN1; this interaction plays a role in viral entry into host cell. Interacts with host SPSB2 (via C-terminus). Part of the viral assembly initiation complex composed of NS2, E1, E2, NS3, NS4A, NS5A and the mature core protein. Interacts with host NEURL3; this interaction prevents E1 binding to glycoprotein E2. Forms a heterodimer with envelope glycoprotein E1. Interacts with host CD81 and SCARB1 receptors; these interactions play a role in viral entry into host cell. Interacts with host EIF2AK2/PKR; this interaction inhibits EIF2AK2 and probably allows the virus to evade the innate immune response. Interacts with host CD209/DC-SIGN and CLEC4M/DC-SIGNR. Interact with host SPCS1; this interaction is essential for viral particle assembly. Interacts with protease NS2. The heterodimer E1/E2 interacts with host CLDN1; this interaction plays a role in viral entry into host cell. Part of the viral assembly initiation complex composed of NS2, E1, E2, NS3, NS4A, NS5A and the mature core protein. Interacts with host SLC3A2/4F2hc; the interaction may facilitate viral entry into host cell. Interacts with human PLSCR1. As to quaternary structure, homohexamer. Homoheptamer. Interacts with protease NS2. In terms of assembly, homodimer. Interacts with host SPCS1; this interaction is essential for viral particle assembly. Interacts with envelope glycoprotein E1. Interacts with envelope glycoprotein E2. Interacts with viroporin p7. Interacts with serine protease/helicase NS3. Part of the replication complex composed of NS2, NS3, NS4A, NS4B, NS5A and the RNA-directed RNA polymerase embedded in an ER-derived membranous web. Part of the viral assembly initiation complex composed of NS2, E1, E2, NS3, NS4A, NS5A and the mature core protein. Interacts with protease NS2. Interacts with non-structural protein 4A; this interaction stabilizes the folding of NS3 serine protease. NS3-NS4A interaction is essential for NS3 activation and allows membrane anchorage of the latter. NS3/NS4A complex also prevents phosphorylation of host IRF3, thus preventing the establishment of dsRNA induced antiviral state. Interacts with host MAVS; this interaction leads to the cleavage and inhibition of host MAVS. Interacts with host TICAM1; this interaction leads to the cleavage and inhibition of host TICAM1. Interacts with host TANK-binding kinase/TBK1; this interaction results in the inhibition of the association between TBK1 and IRF3, which leads to the inhibition of IRF3 activation. Interacts with host RBM24. Part of the replication complex composed of NS2, NS3, NS4A, NS4B, NS5A and the RNA-directed RNA polymerase embedded in an ER-derived membranous web. Part of the viral assembly initiation complex composed of NS2, E1, E2, NS3, NS4A, NS5A and the mature core protein. As to quaternary structure, interacts with NS3 serine protease; this interaction stabilizes the folding of NS3 serine protease. NS3-NS4A interaction is essential for NS3 activation and allows membrane anchorage of the latter. Interacts with non-structural protein 5A (via N-terminus). Part of the replication complex composed of NS2, NS3, NS4A, NS4B, NS5A and the RNA-directed RNA polymerase embedded in an ER-derived membranous web. Part of the viral assembly initiation complex composed of NS2, E1, E2, NS3, NS4A, NS5A and the mature core protein. In terms of assembly, homomultimer. Interacts with non-structural protein NS5A. Interacts with host PLA2G4C; this interaction likely initiates the recruitment of replication complexes to lipid droplets. Interacts with host STING; this interaction disrupts the interaction between STING and TBK1 thereby suppressing the interferon signaling. Part of the replication complex composed of NS2, NS3, NS4A, NS4B, NS5A and the RNA-directed RNA polymerase embedded in an ER-derived membranous web. Monomer. Homodimer; dimerization is required for RNA-binding. Interacts with the mature core protein. Interacts (via N-terminus) with non-structural protein 4A. Interacts with non-structural protein 4B. Interacts (via region D2) with RNA-directed RNA polymerase. Part of the viral assembly initiation complex composed of NS2, E1, E2, NS3, NS4A, NS5A and the mature core protein. Part of the replication complex composed of NS2, NS3, NS4A, NS4B, NS5A and the RNA-directed RNA polymerase embedded in an ER-derived membranous web. Interacts with host GRB2. Interacts with host BIN1. Interacts with host PIK3R1. Interacts with host SRCAP. Interacts with host FKBP8. Interacts (via C-terminus) with host VAPB (via MSP domain). Interacts with host EIF2AK2/PKR; this interaction leads to disruption of EIF2AK2 dimerization by NS5A and probably allows the virus to evade the innate immune response. Interacts (via N-terminus) with host PACSIN2 (via N-terminus); this interaction attenuates protein kinase C alpha-mediated phosphorylation of PACSIN2 by disrupting the interaction between PACSIN2 and PRKCA. Interacts (via N-terminus) with host SRC kinase (via SH2 domain). Interacts with most Src-family kinases. Interacts with host IFI27 and SKP2; promotes the ubiquitin-mediated proteasomal degradation of NS5A. Interacts with host GPS2. Interacts with host TNFRSF21; this interaction allows the modulation by the virus of JNK, p38 MAPK, STAT3, and Akt signaling pathways in a DR6-dependent manner. Interacts (via N-terminus) with host CIDEB (via N-terminus); this interaction seems to regulate the association of HCV particles with APOE. Interacts with host CHKA/Choline Kinase-alpha; CHKA bridges host PI4KA and NS5A and potentiates NS5A-stimulated PI4KA activity, which then facilitates the targeting of the ternary complex to the ER for viral replication. Interacts with host SPSB2 (via C-terminus); this interaction targets NS5A for ubiquitination and degradation. Interacts with host RAB18; this interaction may promote the association of NS5A and other replicase components with lipid droplets. Interacts (via region D2) with host PPIA/CYPA; the interaction stimulates RNA-binding ability of NS5A and is dependent on the peptidyl-prolyl cis-trans isomerase activity of PPIA/CYPA. Interacts with host TRIM14; this interaction induces the degradation of NS5A. As to quaternary structure, homooligomer. Interacts with non-structural protein 5A. Interacts with host VAPB. Interacts with host PRK2/PKN2. Interacts with host HNRNPA1 and SEPT6; these interactions facilitate viral replication. Part of the replication complex composed of NS2, NS3, NS4A, NS4B, NS5A and the RNA-directed RNA polymerase. Requires Zn(2+) as cofactor. It depends on Mg(2+) as a cofactor. Specific enzymatic cleavages in vivo yield mature proteins. The structural proteins, core, E1, E2 and p7 are produced by proteolytic processing by host signal peptidases. The core protein precursor is synthesized as a 23 kDa, which is retained in the ER membrane through the hydrophobic signal peptide. Cleavage by the signal peptidase releases the 21 kDa mature core protein. The cleavage of the core protein precursor occurs between aminoacids 176 and 188 but the exact cleavage site is not known. Some degraded forms of the core protein appear as well during the course of infection. The other proteins (p7, NS2, NS3, NS4A, NS4B, NS5A and NS5B) are cleaved by the viral proteases. Autoprocessing between NS2 and NS3 is mediated by the NS2 cysteine protease catalytic domain and regulated by the NS3 N-terminal domain. In terms of processing, phosphorylated by host PKC and PKA. Post-translationally, ubiquitinated; mediated by UBE3A and leading to core protein subsequent proteasomal degradation. Highly N-glycosylated. In terms of processing, palmitoylation is required for NS2/3 autoprocessing and E2 recruitment to membranes. Post-translationally, palmitoylated. This modification may play a role in its polymerization or in protein-protein interactions. Phosphorylated on serines in a basal form termed p56. p58 is a hyperphosphorylated form of p56. p56 and p58 coexist in the cell in roughly equivalent amounts. Hyperphosphorylation is dependent on the presence of NS4A. Host CSNK1A1/CKI-alpha or RPS6KB1 kinases may be responsible for NS5A phosphorylation. In terms of processing, tyrosine phosphorylation is essential for the interaction with host SRC. Post-translationally, the N-terminus is phosphorylated by host PRK2/PKN2.

The protein resides in the host endoplasmic reticulum membrane. It localises to the host mitochondrion membrane. Its subcellular location is the virion. It is found in the host cytoplasm. The protein localises to the host nucleus. The protein resides in the host lipid droplet. It localises to the virion membrane. Its subcellular location is the host mitochondrion. It is found in the host cell membrane. The protein localises to the host perinuclear region. The catalysed reaction is Hydrolysis of four peptide bonds in the viral precursor polyprotein, commonly with Asp or Glu in the P6 position, Cys or Thr in P1 and Ser or Ala in P1'.. It carries out the reaction a ribonucleoside 5'-triphosphate + H2O = a ribonucleoside 5'-diphosphate + phosphate + H(+). The enzyme catalyses ATP + H2O = ADP + phosphate + H(+). It catalyses the reaction RNA(n) + a ribonucleoside 5'-triphosphate = RNA(n+1) + diphosphate. Inhibited by the antiviral drug hexamethylene amiloride. Inhibition by amantadine appears to be genotype-dependent. Also inhibited by long-alkyl-chain iminosugar derivatives. With respect to regulation, activity is up-regulated by PRK2/PKN2-mediated phosphorylation. In terms of biological role, packages viral RNA to form a viral nucleocapsid, and promotes virion budding. Participates in the viral particle production as a result of its interaction with the non-structural protein 5A. Binds RNA and may function as a RNA chaperone to induce the RNA structural rearrangements taking place during virus replication. Modulates viral translation initiation by interacting with viral IRES and 40S ribosomal subunit. Affects various cell signaling pathways, host immunity and lipid metabolism. Prevents the establishment of cellular antiviral state by blocking the interferon-alpha/beta (IFN-alpha/beta) and IFN-gamma signaling pathways and by blocking the formation of phosphorylated STAT1 and promoting ubiquitin-mediated proteasome-dependent degradation of STAT1. Activates STAT3 leading to cellular transformation. Regulates the activity of cellular genes, including c-myc and c-fos. May repress the promoter of p53, and sequester CREB3 and SP110 isoform 3/Sp110b in the cytoplasm. Represses cell cycle negative regulating factor CDKN1A, thereby interrupting an important check point of normal cell cycle regulation. Targets transcription factors involved in the regulation of inflammatory responses and in the immune response: suppresses TNF-induced NF-kappa-B activation, and activates AP-1. Binds to dendritic cells (DCs) via C1QR1, resulting in down-regulation of T-lymphocytes proliferation. Alters lipid metabolism by interacting with hepatocellular proteins involved in lipid accumulation and storage. Induces up-regulation of FAS promoter activity, and thereby contributes to the increased triglyceride accumulation in hepatocytes (steatosis). Functionally, forms a heterodimer with envelope glycoprotein E2, which mediates virus attachment to the host cell, virion internalization through clathrin-dependent endocytosis and fusion with host membrane. Fusion with the host cell is most likely mediated by both E1 and E2, through conformational rearrangements of the heterodimer required for fusion rather than a classical class II fusion mechanism. E1/E2 heterodimer binds host apolipoproteins such as APOB and ApoE thereby forming a lipo-viro-particle (LVP). APOE associated to the LVP allows the initial virus attachment to cell surface receptors such as the heparan sulfate proteoglycans (HSPGs), syndecan-1 (SDC1), syndecan-1 (SDC2), the low-density lipoprotein receptor (LDLR) and scavenger receptor class B type I (SCARB1). The cholesterol transfer activity of SCARB1 allows E2 exposure and binding of E2 to SCARB1 and the tetraspanin CD81. E1/E2 heterodimer binding on CD81 activates the epithelial growth factor receptor (EGFR) signaling pathway. Diffusion of the complex E1-E2-EGFR-SCARB1-CD81 to the cell lateral membrane allows further interaction with Claudin 1 (CLDN1) and occludin (OCLN) to finally trigger HCV entry. Its function is as follows. Forms a heterodimer with envelope glycoprotein E1, which mediates virus attachment to the host cell, virion internalization through clathrin-dependent endocytosis and fusion with host membrane. Fusion with the host cell is most likely mediated by both E1 and E2, through conformational rearrangements of the heterodimer required for fusion rather than a classical class II fusion mechanism. The interaction between envelope glycoprotein E2 and host apolipoprotein E/APOE allows the proper assembly, maturation and infectivity of the viral particles. This interaction is probably promoted via the up-regulation of cellular autophagy by the virus. E1/E2 heterodimer binds host apolipoproteins such as APOB and APOE thereby forming a lipo-viro-particle (LVP). APOE associated to the LVP allows the initial virus attachment to cell surface receptors such as the heparan sulfate proteoglycans (HSPGs), syndecan-1 (SDC1), syndecan-1 (SDC2), the low-density lipoprotein receptor (LDLR) and scavenger receptor class B type I (SCARB1). The cholesterol transfer activity of SCARB1 allows E2 exposure and binding of E2 to SCARB1 and the tetraspanin CD81. E1/E2 heterodimer binding on CD81 activates the epithelial growth factor receptor (EGFR) signaling pathway. Diffusion of the complex E1-E2-EGFR-SCARB1-CD81 to the cell lateral membrane allows further interaction with Claudin 1 (CLDN1) and occludin (OCLN) to finally trigger HCV entry. Inhibits host EIF2AK2/PKR activation, preventing the establishment of an antiviral state. Viral ligand for CD209/DC-SIGN and CLEC4M/DC-SIGNR, which are respectively found on dendritic cells (DCs), and on liver sinusoidal endothelial cells and macrophage-like cells of lymph node sinuses. These interactions allow the capture of circulating HCV particles by these cells and subsequent facilitated transmission to permissive cells such as hepatocytes and lymphocyte subpopulations. The interaction between E2 and host amino acid transporter complex formed by SLC3A2 and SLC7A5/LAT1 may facilitate viral entry into host cell. Ion channel protein that acts as a viroporin and plays an essential role in the assembly, envelopment and secretion of viral particles. Regulates the host cell secretory pathway, which induces the intracellular retention of viral glycoproteins and favors assembly of viral particles. Creates a pore in acidic organelles and releases Ca(2+) and H(+) in the cytoplasm of infected cells, leading to a productive viral infection. High levels of cytoplasmic Ca(2+) may trigger membrane trafficking and transport of viral ER-associated proteins to viroplasms, sites of viral genome replication. This ionic imbalance induces the assembly of the inflammasome complex, which triggers the maturation of pro-IL-1beta into IL-1beta through the action of caspase-1. Targets also host mitochondria and induces mitochondrial depolarization. In addition of its role as a viroporin, acts as a lipid raft adhesion factor. In terms of biological role, cysteine protease required for the proteolytic auto-cleavage between the non-structural proteins NS2 and NS3. The N-terminus of NS3 is required for the function of NS2 protease (active region NS2-3). Promotes the initiation of viral particle assembly by mediating the interaction between structural and non-structural proteins. Functionally, displays three enzymatic activities: serine protease with a chymotrypsin-like fold, NTPase and RNA helicase. NS3 serine protease, in association with NS4A, is responsible for the cleavages of NS3-NS4A, NS4A-NS4B, NS4B-NS5A and NS5A-NS5B. The NS3/NS4A complex prevents phosphorylation of host IRF3, thus preventing the establishment of dsRNA induced antiviral state. The NS3/NS4A complex induces host amino acid transporter component SLC3A2, thus contributing to HCV propagation. NS3 RNA helicase binds to RNA and unwinds both dsDNA and dsRNA in the 3' to 5' direction, and likely resolves RNA complicated stable secondary structures in the template strand. Binds a single ATP and catalyzes the unzipping of a single base pair of dsRNA. Inhibits host antiviral proteins TBK1 and IRF3 thereby preventing the establishment of an antiviral state. Cleaves host MAVS/CARDIF thereby preventing the establishment of an antiviral state. Cleaves host TICAM1/TRIF, thereby disrupting TLR3 signaling and preventing the establishment of an antiviral state. Its function is as follows. Induces a specific membrane alteration that serves as a scaffold for the virus replication complex. This membrane alteration gives rise to the so-called ER-derived membranous web that contains the replication complex. NS4B self-interaction contributes to its function in membranous web formation. Promotes host TRIF protein degradation in a CASP8-dependent manner thereby inhibiting host TLR3-mediated interferon signaling. Disrupts the interaction between STING and TBK1 contributing to the inhibition of interferon signaling. Phosphorylated protein that is indispensable for viral replication and assembly. Both hypo- and hyperphosphorylated states are required for the viral life cycle. The hyperphosphorylated form of NS5A is an inhibitor of viral replication. Involved in RNA-binding and especially in binding to the viral genome. Zinc is essential for RNA-binding. Participates in the viral particle production as a result of its interaction with the mature viral core protein. Its interaction with host VAPB may target the viral replication complex to vesicles. Down-regulates viral IRES translation initiation. Mediates interferon resistance, presumably by interacting with and inhibiting host EIF2AK2/PKR. Prevents BIN1-induced apoptosis. Acts as a transcriptional activator of some host genes important for viral replication when localized in the nucleus. Via the interaction with host PACSIN2, modulates lipid droplet formation in order to promote virion assembly. Modulates TNFRSF21/DR6 signaling pathway for viral propagation. In terms of biological role, RNA-dependent RNA polymerase that performs primer-template recognition and RNA synthesis during viral replication. Initiates RNA transcription/replication at a flavin adenine dinucleotide (FAD), resulting in a 5'- FAD cap on viral RNAs. In this way, recognition of viral 5' RNA by host pattern recognition receptors can be bypassed, thereby evading activation of antiviral pathways. The protein is Genome polyprotein of Hepatitis C virus genotype 1b (isolate HC-J1) (HCV).